Consider the following 367-residue polypeptide: Histidinol-phosphate aminotransferase (367 aa).

Lysine 230 bears the N6-(pyridoxal phosphate)lysine mark.

The protein belongs to the class-II pyridoxal-phosphate-dependent aminotransferase family. Histidinol-phosphate aminotransferase subfamily. In terms of assembly, homodimer. Requires pyridoxal 5'-phosphate as cofactor.

It carries out the reaction L-histidinol phosphate + 2-oxoglutarate = 3-(imidazol-4-yl)-2-oxopropyl phosphate + L-glutamate. It participates in amino-acid biosynthesis; L-histidine biosynthesis; L-histidine from 5-phospho-alpha-D-ribose 1-diphosphate: step 7/9. The polypeptide is Histidinol-phosphate aminotransferase (Thermobifida fusca (strain YX)).